A 114-amino-acid chain; its full sequence is Large ribosomal subunit protein bL20c (114 aa).

The protein belongs to the bacterial ribosomal protein bL20 family.

It is found in the plastid. Its subcellular location is the chloroplast. In terms of biological role, binds directly to 23S ribosomal RNA and is necessary for the in vitro assembly process of the 50S ribosomal subunit. It is not involved in the protein synthesizing functions of that subunit. This Tetradesmus obliquus (Green alga) protein is Large ribosomal subunit protein bL20c.